The following is a 447-amino-acid chain: N-succinylarginine dihydrolase (447 aa).

Substrate is bound by residues 19-28 (AGLSFGNEAS), asparagine 110, and 137-138 (HR). The active site involves glutamate 174. Arginine 212 provides a ligand contact to substrate. Residue histidine 248 is part of the active site. Substrate is bound by residues aspartate 250 and asparagine 359. The Nucleophile role is filled by cysteine 365.

The protein belongs to the succinylarginine dihydrolase family. In terms of assembly, homodimer.

It carries out the reaction N(2)-succinyl-L-arginine + 2 H2O + 2 H(+) = N(2)-succinyl-L-ornithine + 2 NH4(+) + CO2. It functions in the pathway amino-acid degradation; L-arginine degradation via AST pathway; L-glutamate and succinate from L-arginine: step 2/5. In terms of biological role, catalyzes the hydrolysis of N(2)-succinylarginine into N(2)-succinylornithine, ammonia and CO(2). The polypeptide is N-succinylarginine dihydrolase (Escherichia coli O6:H1 (strain CFT073 / ATCC 700928 / UPEC)).